A 452-amino-acid chain; its full sequence is Selenide, water dikinase 2 (452 aa).

Alanine 2 carries the N-acetylalanine modification. Serine 49 carries the post-translational modification Phosphoserine. Selenocysteine 63 is an active-site residue. Position 63 (selenocysteine 63) is a non-standard amino acid, selenocysteine. Lysine 66 serves as a coordination point for ATP. The segment at 86-111 (PPLTSGLVGGQEETVQEGGLSTRPGP) is disordered. Positions 95-105 (GQEETVQEGGL) are enriched in low complexity. Residues 121-123 (GMD), aspartate 141, aspartate 164, and 215-218 (GGQT) contribute to the ATP site. Aspartate 123 is a Mg(2+) binding site. Aspartate 164 contributes to the Mg(2+) binding site. Residue aspartate 319 participates in Mg(2+) binding.

It belongs to the selenophosphate synthase 1 family. Class I subfamily. In terms of assembly, homodimer. Requires Mg(2+) as cofactor. In terms of processing, truncated SEPHS2 proteins produced by failed UGA/Sec decoding are ubiquitinated by the CRL2(KLHDC3) complex, which recognizes the glycine (Gly) at the C-terminus of truncated SEPHS2 proteins.

It catalyses the reaction hydrogenselenide + ATP + H2O = selenophosphate + AMP + phosphate + 2 H(+). Its function is as follows. Synthesizes selenophosphate from selenide and ATP. This Mus musculus (Mouse) protein is Selenide, water dikinase 2 (Sephs2).